The sequence spans 523 residues: Sensory neuron membrane protein 1 (523 aa).

The Cytoplasmic segment spans residues 1–11; the sequence is MQLPRELKYAA. Residues 12-32 form a helical membrane-spanning segment; it reads IAGGVALFGLIFGWVLFPTIL. Topologically, residues 33 to 458 are extracellular; it reads KSQLKKEMAL…HQLFIPKRVV (426 aa). N-linked (GlcNAc...) asparagine glycosylation is found at asparagine 67 and asparagine 229. 3 cysteine pairs are disulfide-bonded: cysteine 268–cysteine 333, cysteine 297–cysteine 352, and cysteine 335–cysteine 341. A glycan (N-linked (GlcNAc...) asparagine) is linked at asparagine 440. Residues 459–479 traverse the membrane as a helical segment; that stretch reads GVLRWWMVSFGSLGAVIGIVF. The Cytoplasmic segment spans residues 480–523; sequence HFRDHIMRLAVSGDTKVSKVTPEEEEQKDISVIGQAQEPAKVNI.

This sequence belongs to the CD36 family.

The protein localises to the cell membrane. Plays an olfactory role that is not restricted to pheromone sensitivity. The sequence is that of Sensory neuron membrane protein 1 from Helicoverpa armigera (Cotton bollworm).